A 676-amino-acid chain; its full sequence is UvrABC system protein C (676 aa).

A GIY-YIG domain is found at 16 to 95 (VEPGVYRFRD…IKEFDPRFNI (80 aa)). Residues 208-243 (DRLVRDLERKMTAAAEDLDFERAARLRDDIGALRRA) enclose the UVR domain.

It belongs to the UvrC family. As to quaternary structure, interacts with UvrB in an incision complex.

The protein resides in the cytoplasm. Its function is as follows. The UvrABC repair system catalyzes the recognition and processing of DNA lesions. UvrC both incises the 5' and 3' sides of the lesion. The N-terminal half is responsible for the 3' incision and the C-terminal half is responsible for the 5' incision. The sequence is that of UvrABC system protein C from Mycobacterium sp. (strain KMS).